We begin with the raw amino-acid sequence, 350 residues long: UDP-3-O-acylglucosamine N-acyltransferase (350 aa).

Catalysis depends on H248, which acts as the Proton acceptor.

The protein belongs to the transferase hexapeptide repeat family. LpxD subfamily. As to quaternary structure, homotrimer.

It catalyses the reaction a UDP-3-O-[(3R)-3-hydroxyacyl]-alpha-D-glucosamine + a (3R)-hydroxyacyl-[ACP] = a UDP-2-N,3-O-bis[(3R)-3-hydroxyacyl]-alpha-D-glucosamine + holo-[ACP] + H(+). It functions in the pathway bacterial outer membrane biogenesis; LPS lipid A biosynthesis. Its function is as follows. Catalyzes the N-acylation of UDP-3-O-acylglucosamine using 3-hydroxyacyl-ACP as the acyl donor. Is involved in the biosynthesis of lipid A, a phosphorylated glycolipid that anchors the lipopolysaccharide to the outer membrane of the cell. The protein is UDP-3-O-acylglucosamine N-acyltransferase of Nostoc punctiforme (strain ATCC 29133 / PCC 73102).